A 327-amino-acid polypeptide reads, in one-letter code: Probable cell division protein WhiA (327 aa).

The H-T-H motif DNA-binding region spans 275-308; the sequence is SLEELGRLADPPMTKDAVAGRIRRLLSMADRKAK. Positions 304 to 327 are disordered; sequence DRKAKQDGIPDTESAVTPDLLEDA.

It belongs to the WhiA family.

Its function is as follows. Involved in cell division and chromosome segregation. This Mycolicibacterium gilvum (strain PYR-GCK) (Mycobacterium gilvum (strain PYR-GCK)) protein is Probable cell division protein WhiA.